The following is a 326-amino-acid chain: Polycomb complex protein BMI-1 (326 aa).

The RING-type zinc-finger motif lies at 18-57 (CVLCGGYFIDATTIIECLHSFCKTCIVRYLETSKYCPICD). The Nuclear localization signal signature appears at 81–95 (KLVPGLFKNEMKRRR). The tract at residues 162–182 (RYLRCPAAMTVMHLRKFLRSK) is interaction with PHC2. The interval 164–228 (LRCPAAMTVM…GPLPLKYRVR (65 aa)) is interaction with E4F1. Residues 236 to 326 (ISHQRDGLTN…VNGSSATSSG (91 aa)) are disordered. 3 stretches are compositionally biased toward low complexity: residues 266–278 (PSTSSCLPSPSTP), 290–303 (SSTMNGTSSSPSGN), and 315–326 (SSVNGSSATSSG).

In terms of assembly, component of a PRC1-like complex. Identified in a PRC1-like HPRC-H complex with CBX2, CBX4, CBX8, PHC1, PHC2, PHC3 RING1 and RNF2. Interacts with RNF2/RING2. Interacts with RING1. Part of a complex that contains RNF2, UB2D3 and BMI1, where RNF2 and BMI1 form a tight heterodimer, and UB2D3 interacts only with RNF2. The complex composed of RNF2, UB2D3 and BMI1 binds nucleosomes, and has activity only with nucleosomal histone H2A. Interacts with CBX7 and CBX8. Interacts with SPOP. Part of a complex consisting of BMI1, CUL3 and SPOP. Interacts with E4F1. Interacts with PHC2. Interacts with zinc finger protein ZNF277. May be part of a complex including at least ZNF277, BMI1 and RNF2/RING2. Post-translationally, may be polyubiquitinated; which does not lead to proteasomal degradation. Monoubiquitinated.

The protein resides in the nucleus. Its subcellular location is the cytoplasm. Component of a Polycomb group (PcG) multiprotein PRC1-like complex, a complex class required to maintain the transcriptionally repressive state of many genes, including Hox genes, throughout development. PcG PRC1 complex acts via chromatin remodeling and modification of histones; it mediates monoubiquitination of histone H2A 'Lys-119', rendering chromatin heritably changed in its expressibility. The complex composed of RNF2, UB2D3 and BMI1 binds nucleosomes, and has activity only with nucleosomal histone H2A. In the PRC1-like complex, regulates the E3 ubiquitin-protein ligase activity of RNF2/RING2. The sequence is that of Polycomb complex protein BMI-1 (BMI1) from Bos taurus (Bovine).